The sequence spans 638 residues: 1-deoxy-D-xylulose-5-phosphate synthase (638 aa).

Thiamine diphosphate is bound by residues histidine 75 and 116 to 118 (AHS). Aspartate 147 contributes to the Mg(2+) binding site. Residues 148–149 (GA), asparagine 177, tyrosine 288, and glutamate 370 contribute to the thiamine diphosphate site. Position 177 (asparagine 177) interacts with Mg(2+).

It belongs to the transketolase family. DXPS subfamily. In terms of assembly, homodimer. It depends on Mg(2+) as a cofactor. The cofactor is thiamine diphosphate.

It carries out the reaction D-glyceraldehyde 3-phosphate + pyruvate + H(+) = 1-deoxy-D-xylulose 5-phosphate + CO2. It participates in metabolic intermediate biosynthesis; 1-deoxy-D-xylulose 5-phosphate biosynthesis; 1-deoxy-D-xylulose 5-phosphate from D-glyceraldehyde 3-phosphate and pyruvate: step 1/1. In terms of biological role, catalyzes the acyloin condensation reaction between C atoms 2 and 3 of pyruvate and glyceraldehyde 3-phosphate to yield 1-deoxy-D-xylulose-5-phosphate (DXP). This chain is 1-deoxy-D-xylulose-5-phosphate synthase, found in Cupriavidus pinatubonensis (strain JMP 134 / LMG 1197) (Cupriavidus necator (strain JMP 134)).